The sequence spans 439 residues: Xaa-Pro dipeptidase (439 aa).

5 residues coordinate Mn(2+): aspartate 244, aspartate 255, histidine 335, glutamate 380, and glutamate 419.

This sequence belongs to the peptidase M24B family. Bacterial-type prolidase subfamily. Mn(2+) serves as cofactor.

The catalysed reaction is Xaa-L-Pro dipeptide + H2O = an L-alpha-amino acid + L-proline. Its function is as follows. Splits dipeptides with a prolyl residue in the C-terminal position. This chain is Xaa-Pro dipeptidase, found in Shewanella oneidensis (strain ATCC 700550 / JCM 31522 / CIP 106686 / LMG 19005 / NCIMB 14063 / MR-1).